The primary structure comprises 240 residues: Urease accessory protein UreF (240 aa).

Belongs to the UreF family. In terms of assembly, ureD, UreF and UreG form a complex that acts as a GTP-hydrolysis-dependent molecular chaperone, activating the urease apoprotein by helping to assemble the nickel containing metallocenter of UreC. The UreE protein probably delivers the nickel.

The protein resides in the cytoplasm. Functionally, required for maturation of urease via the functional incorporation of the urease nickel metallocenter. In Rhodopseudomonas palustris (strain TIE-1), this protein is Urease accessory protein UreF.